The following is a 657-amino-acid chain: Glycogen debranching enzyme (657 aa).

D336 functions as the Nucleophile in the catalytic mechanism. E371 serves as the catalytic Proton donor. Positions 460–479 (ANGEENRDGTNNNYSNNHGK) are disordered.

It belongs to the glycosyl hydrolase 13 family.

It carries out the reaction Hydrolysis of (1-&gt;6)-alpha-D-glucosidic linkages to branches with degrees of polymerization of three or four glucose residues in limit dextrin.. It participates in glycan degradation; glycogen degradation. Its function is as follows. Removes maltotriose and maltotetraose chains that are attached by 1,6-alpha-linkage to the limit dextrin main chain, generating a debranched limit dextrin. The chain is Glycogen debranching enzyme from Escherichia coli O1:K1 / APEC.